A 608-amino-acid polypeptide reads, in one-letter code: Developmental regulatory protein wetA (608 aa).

Disordered stretches follow at residues 54–88 (ADHH…GVST), 102–125 (VDAT…VDPR), 146–186 (VSMS…MTRK), 202–226 (SKLR…NPPR), 309–352 (WPHQ…HAVP), 447–544 (AQTY…GDIG), and 556–576 (LMTG…EREA). Composition is skewed to low complexity over residues 77-88 (ESTASASSGVST), 107-119 (PSQP…PGAS), and 163-175 (SSPG…SQPS). Residues 313 to 338 (QHPHPHPHPHHPQAHTHPHPHPHPHP) show a composition bias toward basic residues. 2 stretches are compositionally biased toward low complexity: residues 339–350 (HQQAVAGHPQHA) and 502–517 (SSNG…SGRG).

The protein belongs to the wetA family.

Functionally, abaA and wetA are pivotal regulators of conidiophore development and conidium maturation. They act individually and together to regulate their own expression and that of numerous other sporulation-specific genes. Functions to maintain conidial dormancy by suppressing microcycle conidiation. The protein is Developmental regulatory protein wetA of Gibberella zeae (strain ATCC MYA-4620 / CBS 123657 / FGSC 9075 / NRRL 31084 / PH-1) (Wheat head blight fungus).